Consider the following 290-residue polypeptide: AA9 family lytic polysaccharide monooxygenase A (290 aa).

A signal peptide spans 1–17 (MKLSLLASVALVPFVSA). The Cu(2+) site is built by H18 and H101. Cysteines 67 and 189 form a disulfide. O2 is bound at residue H176. Cu(2+) is bound at residue Y187. N220 and N254 each carry an N-linked (GlcNAc...) asparagine glycan. The tract at residues 240–290 (GGSGSGSSSYSKVANVTSSDESSQSGASSSQGTVSTCPNKYNRRHARQFKP) is disordered. Over residues 245 to 275 (GSSSYSKVANVTSSDESSQSGASSSQGTVST) the composition is skewed to low complexity. Over residues 280-290 (YNRRHARQFKP) the composition is skewed to basic residues.

The protein belongs to the polysaccharide monooxygenase AA9 family. The cofactor is Cu(2+).

It is found in the secreted. It catalyses the reaction [(1-&gt;4)-beta-D-glucosyl]n+m + reduced acceptor + O2 = 4-dehydro-beta-D-glucosyl-[(1-&gt;4)-beta-D-glucosyl]n-1 + [(1-&gt;4)-beta-D-glucosyl]m + acceptor + H2O.. Its function is as follows. Lytic polysaccharide monooxygenase (LPMO) that depolymerizes crystalline and amorphous polysaccharides via the oxidation of scissile alpha- or beta-(1-4)-glycosidic bonds, yielding exclusively C1 oxidation products. Catalysis by LPMOs requires the reduction of the active-site copper from Cu(II) to Cu(I) by a reducing agent and H(2)O(2) or O(2) as a cosubstrate. This chain is AA9 family lytic polysaccharide monooxygenase A, found in Aspergillus fumigatus (strain ATCC MYA-4609 / CBS 101355 / FGSC A1100 / Af293) (Neosartorya fumigata).